The chain runs to 332 residues: Fructose-1,6-bisphosphatase class 1 (332 aa).

Mg(2+) is bound by residues Glu-89, Asp-110, Leu-112, and Asp-113. Substrate contacts are provided by residues 113 to 116 (DGSS), Asn-206, Tyr-239, 257 to 259 (YLY), and Lys-269. Glu-275 contacts Mg(2+).

It belongs to the FBPase class 1 family. In terms of assembly, homotetramer. It depends on Mg(2+) as a cofactor.

The protein localises to the cytoplasm. It catalyses the reaction beta-D-fructose 1,6-bisphosphate + H2O = beta-D-fructose 6-phosphate + phosphate. It participates in carbohydrate biosynthesis; gluconeogenesis. This is Fructose-1,6-bisphosphatase class 1 from Escherichia coli O157:H7.